Reading from the N-terminus, the 441-residue chain is Protein eva-1 homolog C (441 aa).

The tract at residues 1–23 (MLLPGPARQPPTPQPVQHPGLRR) is disordered. Positions 1 to 48 (MLLPGPARQPPTPQPVQHPGLRRQVEPPGQLLRLFYCTVLVCSKEISA) are cleaved as a signal peptide. Over residues 7–16 (ARQPPTPQPV) the composition is skewed to pro residues. At 49–322 (LTDFSGYLTK…AYIRAHPERA (274 aa)) the chain is on the extracellular side. An N-linked (GlcNAc...) asparagine glycan is attached at Asn62. One can recognise an SUEL-type lectin 1 domain in the interval 67–159 (ACDGDYLNLQ…KYLLVSFKCQ (93 aa)). A glycan (N-linked (GlcNAc...) asparagine) is linked at Asn165. Positions 168-260 (VCEDQELKLH…KYLTVTYACV (93 aa)) constitute an SUEL-type lectin 2 domain. A helical transmembrane segment spans residues 323–343 (ALLFVSSVCIGLALTLCALVI). Residues 344–441 (RESCAKDFRD…SLPRNMGQFY (98 aa)) lie on the Cytoplasmic side of the membrane. The disordered stretch occupies residues 362–391 (VPGSDKVEEDSEDEEEEEDSSESDFPGELS). The span at 368-383 (VEEDSEDEEEEEDSSE) shows a compositional bias: acidic residues.

It belongs to the EVA1 family.

The protein localises to the cell membrane. Binds heparin. The protein is Protein eva-1 homolog C (EVA1C) of Pan troglodytes (Chimpanzee).